We begin with the raw amino-acid sequence, 20 residues long: 26 kDa protein (20 aa).

The chain is 26 kDa protein from Bacillus cereus.